The following is a 340-amino-acid chain: Heat-inducible transcription repressor HrcA (340 aa).

The protein belongs to the HrcA family.

Functionally, negative regulator of class I heat shock genes (grpE-dnaK-dnaJ and groELS operons). Prevents heat-shock induction of these operons. The chain is Heat-inducible transcription repressor HrcA from Burkholderia vietnamiensis (strain G4 / LMG 22486) (Burkholderia cepacia (strain R1808)).